We begin with the raw amino-acid sequence, 401 residues long: Riboflavin biosynthesis protein RibBA (401 aa).

The segment at 1 to 203 is DHBP synthase; sequence MTDFQFSKVE…IQQLQEYRRK (203 aa). D-ribulose 5-phosphate is bound by residues 30–31, aspartate 35, 142–146, and glutamate 166; these read RE and RNGHT. Residue glutamate 31 participates in Mg(2+) binding. Residue histidine 145 coordinates Mg(2+). The segment at 204–401 is GTP cyclohydrolase II; the sequence is HDSLVKQISV…QIKMGHMFNF (198 aa). GTP is bound at residue 254–258; that stretch reads RIHSE. Positions 259, 270, and 272 each coordinate Zn(2+). GTP contacts are provided by residues glutamine 275, 297 to 299, and threonine 319; that span reads EGR. The active-site Proton acceptor; for GTP cyclohydrolase activity is the aspartate 331. Arginine 333 (nucleophile; for GTP cyclohydrolase activity) is an active-site residue. The GTP site is built by threonine 354 and lysine 359.

In the N-terminal section; belongs to the DHBP synthase family. This sequence in the C-terminal section; belongs to the GTP cyclohydrolase II family. The cofactor is Mg(2+). Requires Mn(2+) as cofactor. Zn(2+) is required as a cofactor.

The enzyme catalyses D-ribulose 5-phosphate = (2S)-2-hydroxy-3-oxobutyl phosphate + formate + H(+). The catalysed reaction is GTP + 4 H2O = 2,5-diamino-6-hydroxy-4-(5-phosphoribosylamino)-pyrimidine + formate + 2 phosphate + 3 H(+). It participates in cofactor biosynthesis; riboflavin biosynthesis; 2-hydroxy-3-oxobutyl phosphate from D-ribulose 5-phosphate: step 1/1. It functions in the pathway cofactor biosynthesis; riboflavin biosynthesis; 5-amino-6-(D-ribitylamino)uracil from GTP: step 1/4. Functionally, catalyzes the conversion of D-ribulose 5-phosphate to formate and 3,4-dihydroxy-2-butanone 4-phosphate. Catalyzes the conversion of GTP to 2,5-diamino-6-ribosylamino-4(3H)-pyrimidinone 5'-phosphate (DARP), formate and pyrophosphate. The sequence is that of Riboflavin biosynthesis protein RibBA from Actinobacillus pleuropneumoniae serotype 7 (strain AP76).